A 71-amino-acid polypeptide reads, in one-letter code: Large ribosomal subunit protein bL31 (71 aa).

Zn(2+) contacts are provided by C16, C18, C37, and C40.

Belongs to the bacterial ribosomal protein bL31 family. Type A subfamily. Part of the 50S ribosomal subunit. Requires Zn(2+) as cofactor.

Functionally, binds the 23S rRNA. This is Large ribosomal subunit protein bL31 from Pseudoalteromonas translucida (strain TAC 125).